A 90-amino-acid chain; its full sequence is Small ribosomal subunit protein bS16 (90 aa).

This sequence belongs to the bacterial ribosomal protein bS16 family.

This Bacillus licheniformis (strain ATCC 14580 / DSM 13 / JCM 2505 / CCUG 7422 / NBRC 12200 / NCIMB 9375 / NCTC 10341 / NRRL NRS-1264 / Gibson 46) protein is Small ribosomal subunit protein bS16.